Consider the following 136-residue polypeptide: Protein NrdI (136 aa).

It belongs to the NrdI family.

Probably involved in ribonucleotide reductase function. The protein is Protein NrdI of Klebsiella pneumoniae (strain 342).